The chain runs to 195 residues: CASP-like protein IN26 (195 aa).

The Cytoplasmic segment spans residues 1-26 (VAPTGSVETEKAGPSYKPKEYYKVTE). Residues 27–47 (AILRLLLLASLVVAVVVMVTS) form a helical membrane-spanning segment. The Extracellular portion of the chain corresponds to 48–75 (KETELISVKLDPFPPFMLPLTAKFTQSP). The chain crosses the membrane as a helical span at residues 76–96 (AFIYFVAGLSVAGLYTIISTL). The Cytoplasmic segment spans residues 97–120 (ASFYNLLIKPGFCPALVSHFIILD). The chain crosses the membrane as a helical span at residues 121 to 143 (VVMLGIVGTATGAAGGVAYIGLK). Over 144-163 (GNSHVGWTKVCNKYGKLCTH) the chain is Extracellular. Residues 164 to 184 (LGASLAVSFFAFIVLLLLIIL) traverse the membrane as a helical segment. Residues 185 to 195 (SIHSLSKKIPK) are Cytoplasmic-facing.

It belongs to the Casparian strip membrane proteins (CASP) family. Homodimer and heterodimers.

Its subcellular location is the cell membrane. The polypeptide is CASP-like protein IN26 (IN26) (Ipomoea nil (Japanese morning glory)).